The sequence spans 532 residues: T-complex protein 1 subunit epsilon (532 aa).

Belongs to the TCP-1 chaperonin family. Component of the T-complex protein 1 (TCP1) complex.

Its subcellular location is the cytoplasm. Molecular chaperone; assists the folding of proteins upon ATP hydrolysis. The chain is T-complex protein 1 subunit epsilon (CCT5) from Encephalitozoon cuniculi (strain GB-M1) (Microsporidian parasite).